The primary structure comprises 406 residues: Kelch domain-containing protein 2 (406 aa).

Kelch repeat units follow at residues 31–85, 92–136, 148–207, 221–259, 271–311, and 322–359; these read ERSG…NTEG, SGSC…ERID, LGVW…AWSQ, HACATVGNKGFVFGGRYRDARMNDLHYLNLDTWEWNELI, HSLT…IQFN, and HTACASDEGEVIVFGGCANNLLVHHRAAHSNEVLIFSV.

In terms of assembly, component of a CRL2(KLHDC2) E3 ubiquitin-protein ligase complex, also named ECS(KLHDC2) complex, composed of CUL2, Elongin BC (ELOB and ELOC), RBX1 and substrate-specific adapter KLHDC2. May form oligomers as a KLHDC2-ELOB-ELOC complex; this interaction is autoinhibitory for the E3 ligase complex as the substrate-binding site of KLHDC2 is blocked in the oligomer. Interacts with CREB3; interaction is direct and specific as it does not interact with CREB1, ATF4, ATF6, JUN, FOS, CEBPA or herpes simplex virus transactivator VP16. Post-translationally, autoubiquitinated by the CRL2(KLHDC2) E3 ligase complex.

Its subcellular location is the nucleus. The protein operates within protein modification; protein ubiquitination. Its function is as follows. Substrate-recognition component of a Cul2-RING (CRL2) E3 ubiquitin-protein ligase complex of the DesCEND (destruction via C-end degrons) pathway, which recognizes a C-degron located at the extreme C terminus of target proteins, leading to their ubiquitination and degradation. The C-degron recognized by the DesCEND pathway is usually a motif of less than ten residues and can be present in full-length proteins, truncated proteins or proteolytically cleaved forms. The CRL2(KLHDC2) complex specifically recognizes proteins with a diglycine (Gly-Gly) at the C-terminus, leading to their ubiquitination and degradation. The CRL2(KLHDC2) complex mediates ubiquitination and degradation of truncated SELENOK and SELENOS selenoproteins produced by failed UGA/Sec decoding, which end with a diglycine. The CRL2(KLHDC2) complex also recognizes proteolytically cleaved proteins ending with Gly-Gly, such as the N-terminal fragment of USP1, leading to their degradation. May also act as an indirect repressor of CREB3-mediated transcription by interfering with CREB3-DNA-binding. The protein is Kelch domain-containing protein 2 of Mus musculus (Mouse).